The following is a 630-amino-acid chain: Plastin-1 (630 aa).

Met-1 bears the N-acetylmethionine mark. EF-hand domains follow at residues 11 to 46 and 51 to 86; these read EELE…ASLP and KVRE…LKSK. Ca(2+) contacts are provided by Asp-24, Asp-26, Ser-28, Tyr-30, Glu-35, Asp-64, Asn-66, Asp-68, Lys-70, and Glu-75. 2 actin-binding regions span residues 108–381 and 382–626; these read TSSI…CLHK and PDNN…GKGL. Calponin-homology (CH) domains are found at residues 122 to 238, 266 to 377, 396 to 505, and 517 to 626; these read EEEK…KVGL, LSPE…NTYP, SKEE…RRYT, and KVTD…GKGL.

Monomer. Phosphorylated. In the inner ear, it is expressed in the organ of Corti. Abundant in the utricle (at protein level).

The protein resides in the cytoplasm. The protein localises to the cell projection. It is found in the stereocilium. Its function is as follows. Actin-bundling protein. In the inner ear, it is required for stereocilia formation. Mediates liquid packing of actin filaments that is necessary for stereocilia to grow to their proper dimensions. The chain is Plastin-1 (Pls1) from Mus musculus (Mouse).